Reading from the N-terminus, the 475-residue chain is Putative aldehyde dehydrogenase (475 aa).

NAD(+) contacts are provided by residues 146-147 (WN) and 223-224 (GS). Glu-245 acts as the Proton acceptor in catalysis. Leu-246 lines the NAD(+) pocket. The active-site Nucleophile is the Cys-279. NAD(+) is bound at residue Glu-379.

This sequence belongs to the aldehyde dehydrogenase family.

It carries out the reaction an aldehyde + NAD(+) + H2O = a carboxylate + NADH + 2 H(+). This Staphylococcus aureus (strain MSSA476) protein is Putative aldehyde dehydrogenase.